The following is a 562-amino-acid chain: Malate synthase (562 aa).

Residue Arg-177 is the Proton acceptor of the active site. Asp-463 serves as the catalytic Proton donor. Residues 560–562 (SRL) carry the Microbody targeting signal motif.

It belongs to the malate synthase family.

Its subcellular location is the glyoxysome. It carries out the reaction glyoxylate + acetyl-CoA + H2O = (S)-malate + CoA + H(+). Its pathway is carbohydrate metabolism; glyoxylate cycle; (S)-malate from isocitrate: step 2/2. Functionally, does not seem to be essential for lipid utilization and gluconeogenesis in seedlings. The protein is Malate synthase of Arabidopsis thaliana (Mouse-ear cress).